A 196-amino-acid chain; its full sequence is Anthranilate synthase component 2 (196 aa).

The Glutamine amidotransferase type-1 domain maps to 3–196 (NIVFIDNFDS…IEWALEKNNA (194 aa)). 57-59 (GPG) is an L-glutamine binding site. C84 acts as the Nucleophile; for GATase activity in catalysis. L-glutamine-binding positions include Q88 and 134-135 (SL). Active-site for GATase activity residues include H170 and E172.

In terms of assembly, heterotetramer consisting of two non-identical subunits: a beta subunit (TrpG) and a large alpha subunit (TrpE).

The enzyme catalyses chorismate + L-glutamine = anthranilate + pyruvate + L-glutamate + H(+). It functions in the pathway amino-acid biosynthesis; L-tryptophan biosynthesis; L-tryptophan from chorismate: step 1/5. Part of a heterotetrameric complex that catalyzes the two-step biosynthesis of anthranilate, an intermediate in the biosynthesis of L-tryptophan. In the first step, the glutamine-binding beta subunit (TrpG) of anthranilate synthase (AS) provides the glutamine amidotransferase activity which generates ammonia as a substrate that, along with chorismate, is used in the second step, catalyzed by the large alpha subunit of AS (TrpE) to produce anthranilate. In the absence of TrpG, TrpE can synthesize anthranilate directly from chorismate and high concentrations of ammonia. This is Anthranilate synthase component 2 (trpG) from Vibrio parahaemolyticus serotype O3:K6 (strain RIMD 2210633).